The chain runs to 365 residues: Aminomethyltransferase (365 aa).

Belongs to the GcvT family. The glycine cleavage system is composed of four proteins: P, T, L and H.

The enzyme catalyses N(6)-[(R)-S(8)-aminomethyldihydrolipoyl]-L-lysyl-[protein] + (6S)-5,6,7,8-tetrahydrofolate = N(6)-[(R)-dihydrolipoyl]-L-lysyl-[protein] + (6R)-5,10-methylene-5,6,7,8-tetrahydrofolate + NH4(+). Functionally, the glycine cleavage system catalyzes the degradation of glycine. This chain is Aminomethyltransferase, found in Cronobacter sakazakii (strain ATCC BAA-894) (Enterobacter sakazakii).